We begin with the raw amino-acid sequence, 273 residues long: Glutamate 5-kinase (273 aa).

Residue lysine 15 coordinates ATP. 3 residues coordinate substrate: serine 55, aspartate 142, and asparagine 158. ATP is bound by residues 178–179 (SD) and 220–226 (TGGMLSK).

This sequence belongs to the glutamate 5-kinase family.

The protein localises to the cytoplasm. It catalyses the reaction L-glutamate + ATP = L-glutamyl 5-phosphate + ADP. It functions in the pathway amino-acid biosynthesis; L-proline biosynthesis; L-glutamate 5-semialdehyde from L-glutamate: step 1/2. In terms of biological role, catalyzes the transfer of a phosphate group to glutamate to form L-glutamate 5-phosphate. In Streptococcus pyogenes serotype M18 (strain MGAS8232), this protein is Glutamate 5-kinase.